Reading from the N-terminus, the 179-residue chain is Interleukin-10 (179 aa).

An N-terminal signal peptide occupies residues 1 to 19; it reads MPSSSALLCCLVFLAGVAA. 2 disulfide bridges follow: cysteine 31–cysteine 127 and cysteine 81–cysteine 133. A glycan (N-linked (GlcNAc...) asparagine) is linked at asparagine 135.

Belongs to the IL-10 family. Homodimer. Interacts with IL10RA and IL10RB.

The protein localises to the secreted. Its function is as follows. Major immune regulatory cytokine that acts on many cells of the immune system where it has profound anti-inflammatory functions, limiting excessive tissue disruption caused by inflammation. Mechanistically, IL10 binds to its heterotetrameric receptor comprising IL10RA and IL10RB leading to JAK1 and STAT2-mediated phosphorylation of STAT3. In turn, STAT3 translocates to the nucleus where it drives expression of anti-inflammatory mediators. Targets antigen-presenting cells (APCs) such as macrophages and monocytes and inhibits their release of pro-inflammatory cytokines including granulocyte-macrophage colony-stimulating factor /GM-CSF, granulocyte colony-stimulating factor/G-CSF, IL-1 alpha, IL-1 beta, IL-6, IL-8 and TNF-alpha. Also interferes with antigen presentation by reducing the expression of MHC-class II and co-stimulatory molecules, thereby inhibiting their ability to induce T cell activation. In addition, controls the inflammatory response of macrophages by reprogramming essential metabolic pathways including mTOR signaling. The protein is Interleukin-10 (IL10) of Bubalus carabanensis (Swamp type water buffalo).